Consider the following 486-residue polypeptide: Replication factor C large subunit (486 aa).

46 to 53 contacts ATP; it reads GPPGSGKT. A disordered region spans residues 419-486; sequence VKKETPKKTE…KKQATLDSFF (68 aa). Basic and acidic residues-rich tracts occupy residues 420–432 and 442–480; these read KKETPKKTEKPKE and RISEPPKEPLKEVIEETLEKSVEKADTKEEKKKDPKKQA.

It belongs to the activator 1 small subunits family. RfcL subfamily. Heteromultimer composed of small subunits (RfcS) and large subunits (RfcL).

Its function is as follows. Part of the RFC clamp loader complex which loads the PCNA sliding clamp onto DNA. The polypeptide is Replication factor C large subunit (Methanococcus maripaludis (strain DSM 14266 / JCM 13030 / NBRC 101832 / S2 / LL)).